A 301-amino-acid polypeptide reads, in one-letter code: Cytidine deaminase 1 (301 aa).

2 consecutive CMP/dCMP-type deaminase domains span residues 23-156 and 188-301; these read SVIQ…FGPD and DSSA…CYEA. 64-66 provides a ligand contact to substrate; sequence NVE. H77 contacts Zn(2+). The active-site Proton donor is E79. Residues C104 and C107 each contribute to the Zn(2+) site.

This sequence belongs to the cytidine and deoxycytidylate deaminase family. In terms of assembly, homodimer. It depends on Zn(2+) as a cofactor. Expressed in roots, rosette leaves, stems and flowers.

The enzyme catalyses cytidine + H2O + H(+) = uridine + NH4(+). The catalysed reaction is 2'-deoxycytidine + H2O + H(+) = 2'-deoxyuridine + NH4(+). With respect to regulation, inhibited by uridine, CMP and dCMP. Functionally, this enzyme scavenges exogenous and endogenous cytidine and 2'-deoxycytidine for UMP synthesis. Functions as a conventional cytidine deaminase. Has no affinity for RNA and is not involved in RNA-editing by C-to-U deamination. This is Cytidine deaminase 1 (CDA1) from Arabidopsis thaliana (Mouse-ear cress).